The sequence spans 90 residues: MTRTVHCRKYKEELPGLDRPPYPGPKGEDIYNNVSRQAWDEWQKHQTMLINERRLNMMNAEDRKFLQAEMEKFLSGEEYAQAEGYVQPKE.

It belongs to the Fe(2+)-trafficking protein family.

In terms of biological role, could be a mediator in iron transactions between iron acquisition and iron-requiring processes, such as synthesis and/or repair of Fe-S clusters in biosynthetic enzymes. The sequence is that of Probable Fe(2+)-trafficking protein from Azotobacter vinelandii (strain DJ / ATCC BAA-1303).